The sequence spans 519 residues: MIPDVSRALSWLEAHPTILKGIRRGVERETLRITSDGSLAITEHPKTLGAALTHKWITTDFAESLLEFITPAGDDIKYTISFLSDIHRHTARVLDKEKMWPLSMPCFIDAEENITLAQYGASNVGRYKTLYREGLKNRYGALMQTISGVHYNFSLPIEFWRAWVGVEDAESGKEQISNGYFRLIRNYYRFGWVIPYLFGASPAICSSFLRGRETSFLFERTEDGTCYLPYATSLRMSNLGYTNKSQSDLNITFNNLHTYIDGLKKAIHKPSDEFAKLGTKQGDKHIQLNTNVLQIENELYAPIRPKRVTRGNESPSDALLRGGVEYIEVRSLDINPFAAIGVNETQIRFLDLFLIWCVLAEAPEMGSDELDCCRKNWNRVILEGRKPGQMIGLGCGSVEEPLAKVGKKLFSDLKRVAAILDSCSGTQYQKVCEELIATFDDSSLTLSARVLEKMKSQGIGGFGLELADEYHQQLISEKYEVISDEQFAIERRASVERQDALEREDTMSFDEYLKQQTGC.

The protein belongs to the glutamate--cysteine ligase type 1 family. Type 1 subfamily.

It catalyses the reaction L-cysteine + L-glutamate + ATP = gamma-L-glutamyl-L-cysteine + ADP + phosphate + H(+). It functions in the pathway sulfur metabolism; glutathione biosynthesis; glutathione from L-cysteine and L-glutamate: step 1/2. This is Glutamate--cysteine ligase from Photorhabdus laumondii subsp. laumondii (strain DSM 15139 / CIP 105565 / TT01) (Photorhabdus luminescens subsp. laumondii).